We begin with the raw amino-acid sequence, 204 residues long: MDYEIKTLDNGSAGTAVLPDEIFGVTPRADIMARVVHWQLAKRRAGTHKVKGMGEVSGTTKKPYRQKGTGSARQGSLRAPQYRTGGAVHGPVVRDHGYDLPKKVRRLGLISALSQKAAEGKLVVLDAATASGRTSELAAKVKALGWKSALIVDATVEENFGRAARNLPKIDALPTIGANVYDILNHDVLAITRAGVEGLKERLA.

The disordered stretch occupies residues 49–90; it reads KVKGMGEVSGTTKKPYRQKGTGSARQGSLRAPQYRTGGAVHG.

Belongs to the universal ribosomal protein uL4 family. In terms of assembly, part of the 50S ribosomal subunit.

One of the primary rRNA binding proteins, this protein initially binds near the 5'-end of the 23S rRNA. It is important during the early stages of 50S assembly. It makes multiple contacts with different domains of the 23S rRNA in the assembled 50S subunit and ribosome. Its function is as follows. Forms part of the polypeptide exit tunnel. This Gluconacetobacter diazotrophicus (strain ATCC 49037 / DSM 5601 / CCUG 37298 / CIP 103539 / LMG 7603 / PAl5) protein is Large ribosomal subunit protein uL4.